A 147-amino-acid chain; its full sequence is Small ribosomal subunit protein bS6 (147 aa).

The tract at residues 96–147 is disordered; it reads VTEPSPMMKAKEERFTKRDDREERSDRSEAPRAEAPAKAEAPAKAEDEAAAE. The span at 104-147 shows a compositional bias: basic and acidic residues; the sequence is KAKEERFTKRDDREERSDRSEAPRAEAPAKAEAPAKAEDEAAAE.

It belongs to the bacterial ribosomal protein bS6 family.

In terms of biological role, binds together with bS18 to 16S ribosomal RNA. This is Small ribosomal subunit protein bS6 from Photobacterium profundum (strain SS9).